A 301-amino-acid chain; its full sequence is uncharacterized protein (301 aa).

One can recognise an HTH lysR-type domain in the interval 1-58 (MDIRHLTYFLEVARLKSFTKASQSLYVSQPTISKMIKNLEEELGIELFYRNGRQVELT). Positions 18–37 (FTKASQSLYVSQPTISKMIK) form a DNA-binding region, H-T-H motif.

It belongs to the LysR transcriptional regulatory family.

This is an uncharacterized protein from Bacillus subtilis (strain 168).